Reading from the N-terminus, the 360-residue chain is Pyrimidine monooxygenase RutA (360 aa).

Residues 49–50 (IK), Asn-115, Glu-124, 140–141 (RY), and Ser-190 each bind FMN.

The protein belongs to the NtaA/SnaA/DszA monooxygenase family. RutA subfamily.

It carries out the reaction uracil + FMNH2 + NADH + O2 = (Z)-3-ureidoacrylate + FMN + NAD(+) + H2O + H(+). The catalysed reaction is thymine + FMNH2 + NADH + O2 = (Z)-2-methylureidoacrylate + FMN + NAD(+) + H2O + H(+). Functionally, catalyzes the pyrimidine ring opening between N-3 and C-4 by an unusual flavin hydroperoxide-catalyzed mechanism, adding oxygen atoms in the process to yield ureidoacrylate peracid, that immediately reacts with FMN forming ureidoacrylate and FMN-N(5)-oxide. The FMN-N(5)-oxide reacts spontaneously with NADH to produce FMN. Requires the flavin reductase RutF to regenerate FMN in vivo. This chain is Pyrimidine monooxygenase RutA, found in Stutzerimonas stutzeri (strain A1501) (Pseudomonas stutzeri).